Reading from the N-terminus, the 338-residue chain is 4-hydroxythreonine-4-phosphate dehydrogenase (338 aa).

Positions 140 and 141 each coordinate substrate. A divalent metal cation contacts are provided by histidine 172, histidine 217, and histidine 271. The substrate site is built by lysine 279, asparagine 288, and arginine 297.

It belongs to the PdxA family. In terms of assembly, homodimer. It depends on a divalent metal cation as a cofactor.

The protein resides in the cytoplasm. The catalysed reaction is 4-(phosphooxy)-L-threonine + NAD(+) = 3-amino-2-oxopropyl phosphate + CO2 + NADH. It participates in cofactor biosynthesis; pyridoxine 5'-phosphate biosynthesis; pyridoxine 5'-phosphate from D-erythrose 4-phosphate: step 4/5. Its function is as follows. Catalyzes the NAD(P)-dependent oxidation of 4-(phosphooxy)-L-threonine (HTP) into 2-amino-3-oxo-4-(phosphooxy)butyric acid which spontaneously decarboxylates to form 3-amino-2-oxopropyl phosphate (AHAP). This is 4-hydroxythreonine-4-phosphate dehydrogenase from Prosthecochloris aestuarii (strain DSM 271 / SK 413).